A 521-amino-acid polypeptide reads, in one-letter code: NAD(P)H-quinone oxidoreductase subunit 2 (521 aa).

The next 14 membrane-spanning stretches (helical) occupy residues 16–36, 43–63, 80–100, 110–130, 133–153, 168–188, 211–231, 245–265, 279–299, 307–327, 335–355, 379–399, 401–421, and 467–487; these read ILPE…DLIG, WLPY…YTAW, LSIV…LMSI, LAEF…LSGA, LVMI…MTGY, LLIG…LYGL, LGLA…ISAV, PTPV…ALAI, WHLI…VVAL, MLAY…TAGT, VFYL…VILF, LGLS…GFFG, IYLF…LALV, and VGLV…NPLF.

It belongs to the complex I subunit 2 family. In terms of assembly, NDH-1 can be composed of about 15 different subunits; different subcomplexes with different compositions have been identified which probably have different functions.

It is found in the cellular thylakoid membrane. The catalysed reaction is a plastoquinone + NADH + (n+1) H(+)(in) = a plastoquinol + NAD(+) + n H(+)(out). The enzyme catalyses a plastoquinone + NADPH + (n+1) H(+)(in) = a plastoquinol + NADP(+) + n H(+)(out). NDH-1 shuttles electrons from an unknown electron donor, via FMN and iron-sulfur (Fe-S) centers, to quinones in the respiratory and/or the photosynthetic chain. The immediate electron acceptor for the enzyme in this species is believed to be plastoquinone. Couples the redox reaction to proton translocation, and thus conserves the redox energy in a proton gradient. Cyanobacterial NDH-1 also plays a role in inorganic carbon-concentration. This Crocosphaera subtropica (strain ATCC 51142 / BH68) (Cyanothece sp. (strain ATCC 51142)) protein is NAD(P)H-quinone oxidoreductase subunit 2.